Reading from the N-terminus, the 578-residue chain is SUMOylated effector protein AmpA (578 aa).

The disordered stretch occupies residues 144–169; it reads PQTVDPSVVESATGSGVDTQEEQEID. 3 consecutive repeat copies span residues 180–272, 304–425, and 428–557. The tract at residues 180–557 is 3 X approximate tandem repeats; it reads TEEQEVILEE…VEADAGMQQE (378 aa). The segment at 516–578 is disordered; sequence VSVEADAGMQ…DPDDEDVLSY (63 aa).

Post-translationally, polysumoylated during infection on at least two lysine residues, in the N- and C-terminal section. SUMO2/3 modification of AmpA throughout the infection cycle is likely critical for bacterial intracellular survival, while terminal SUMO1 conjugation of AmpA may promote a late-stage infection cycle event. Only a small portion of the available AmpA pool is actually SUMOylated at any given time.

The protein localises to the secreted. It is found in the host membrane. The protein resides in the host cytoplasm. Its subcellular location is the host cytosol. Its function is as follows. Secreted effector that hijacks host cell SUMOylation during A.phagocytophilum infection and is important for the pathogen's intracellular survival. This is SUMOylated effector protein AmpA from Anaplasma phagocytophilum (strain HZ).